A 4544-amino-acid polypeptide reads, in one-letter code: Prolow-density lipoprotein receptor-related protein 1 (4544 aa).

Positions M1 to A19 are cleaved as a signal peptide. Residues A20–G4419 are Extracellular-facing. LDL-receptor class A domains are found at residues K25 to Q66 and Q70 to E110. Intrachain disulfides connect C27–C40, C34–C53, C47–C64, C72–C85, C79–C98, and C92–C108. The 39-residue stretch at L111–K149 folds into the EGF-like 1 domain. N114 carries N-linked (GlcNAc...) asparagine glycosylation. Intrachain disulfides connect C115/C124, C120/C133, C135/C148, C154/C164, C160/C173, and C175/C188. An N-linked (GlcNAc...) asparagine glycan is attached at N136. One can recognise an EGF-like 2; calcium-binding domain in the interval D150 to K189. N-linked (GlcNAc...) asparagine glycans are attached at residues N185, N239, and N274. LDL-receptor class B repeat units lie at residues G292 to M334, G335 to S378, and R379 to Y422. N-linked (GlcNAc...) asparagine glycosylation is present at N357. The N-linked (GlcNAc...) asparagine glycan is linked to N446. An EGF-like 3 domain is found at R474–K520. Intrachain disulfides connect C478/C493, C489/C504, and C506/C519. LDL-receptor class B repeat units follow at residues G571–G613, D614–N659, G660–A710, and G711–Y754. N-linked (GlcNAc...) (complex) asparagine glycosylation occurs at N729. In terms of domain architecture, EGF-like 4 spans G803–L843. 33 disulfides stabilise this stretch: C807/C818, C814/C827, C829/C842, C854/C866, C861/C879, C873/C890, C895/C907, C902/C920, C914/C931, C936/C948, C943/C961, C955/C971, C976/C989, C984/C1002, C996/C1011, C1015/C1027, C1022/C1040, C1034/C1051, C1062/C1075, C1069/C1088, C1082/C1097, C1104/C1118, C1112/C1131, C1125/C1140, C1145/C1159, C1152/C1172, C1166/C1182, C1185/C1196, C1192/C1206, C1208/C1221, C1227/C1237, C1233/C1246, and C1248/C1261. LDL-receptor class A domains follow at residues P852–Q892, H893–A933, R934–Y973, P974–H1013, H1013–N1053, G1060–G1099, H1102–S1142, and L1143–C1182. Ca(2+)-binding residues include W871, D874, D876, D878, D884, and E885. N-linked (GlcNAc...) asparagine glycosylation occurs at N928. The Ca(2+) site is built by W1032, D1035, D1037, D1039, D1045, and E1046. An N-linked (GlcNAc...) asparagine glycan is attached at N1050. Ca(2+)-binding residues include W1080, D1083, D1085, D1087, D1093, and E1094. N-linked (GlcNAc...) asparagine glycans are attached at residues N1154 and N1155. EGF-like domains are found at residues D1183–Q1222 and I1223–R1262. N-linked (GlcNAc...) asparagine glycosylation is found at N1195 and N1218. LDL-receptor class B repeat units lie at residues S1309–A1355, G1356–D1398, G1399–E1445, K1446–E1490, and V1491–S1531. An N-linked (GlcNAc...) (complex) asparagine glycan is attached at N1511. One can recognise an EGF-like 7 domain in the interval A1536 to Y1579. Cystine bridges form between C1540/C1553, C1549/C1563, and C1565/C1578. N-linked (GlcNAc...) asparagine glycosylation is found at N1558, N1575, N1616, and N1645. 4 LDL-receptor class B repeats span residues Q1627 to S1669, R1670 to R1713, G1714 to E1753, and S1754 to K1798. 4 N-linked (GlcNAc...) asparagine glycosylation sites follow: N1723, N1733, N1763, and N1825. An EGF-like 8 domain is found at G1846–E1887. 3 disulfide bridges follow: C1850–C1861, C1857–C1871, and C1873–C1886. The N-linked (GlcNAc...) asparagine glycan is linked to N1933. 4 LDL-receptor class B repeats span residues D1934 to A1976, G1977 to K2019, G2020 to D2063, and G2064 to F2107. The N-linked (GlcNAc...) asparagine glycan is linked to N1995. Residue K2009 is modified to N6-acetyllysine. N2048 is a glycosylation site (N-linked (GlcNAc...) asparagine). N-linked (GlcNAc...) asparagine glycosylation is found at N2117 and N2127. One can recognise an EGF-like 9 domain in the interval G2155–R2195. Cystine bridges form between C2159–C2170, C2166–C2180, and C2182–C2194. LDL-receptor class B repeat units follow at residues N2253–W2294, D2295–Q2343, N2344–A2388, E2389–H2431, and I2432–D2473. A glycan (N-linked (GlcNAc...) asparagine) is linked at N2472. The 41-residue stretch at E2478–R2518 folds into the EGF-like 10 domain. Intrachain disulfides connect C2482–C2493, C2489–C2503, and C2505–C2517. N2502 carries an N-linked (GlcNAc...) asparagine glycan. N2521 is a glycosylation site (N-linked (GlcNAc...) asparagine). LDL-receptor class A domains follow at residues S2522–S2563, R2564–K2602, T2603–A2641, T2642–G2690, P2694–K2732, K2732–G2771, and K2772–Y2814. Intrachain disulfides connect C2524–C2537, C2532–C2550, C2544–C2561, C2566–C2578, C2573–C2591, and C2585–C2600. Residue N2539 is glycosylated (N-linked (GlcNAc...) asparagine). N2601 carries an N-linked (GlcNAc...) asparagine glycan. 15 disulfide bridges follow: C2605–C2617, C2612–C2630, C2624–C2639, C2644–C2666, C2660–C2679, C2673–C2688, C2696–C2708, C2703–C2721, C2715–C2730, C2734–C2746, C2741–C2759, C2753–C2769, C2774–C2787, C2781–C2800, and C2794–C2812. 2 N-linked (GlcNAc...) asparagine glycosylation sites follow: N2620 and N2638. An N-linked (GlcNAc...) asparagine glycan is attached at N2815. LDL-receptor class A domains are found at residues S2816–Y2855, P2856–S2899, and H2902–H2940. 15 disulfide bridges follow: C2818–C2830, C2825–C2843, C2837–C2853, C2858–C2870, C2865–C2884, C2878–C2897, C2904–C2917, C2912–C2930, C2924–C2939, C2944–C2956, C2952–C2965, C2967–C2980, C2986–C2996, C2992–C3005, and C3007–C3021. The N-linked (GlcNAc...) asparagine glycan is linked to N2905. Residues I2941 to A2981 enclose the EGF-like 11 domain. The EGF-like 12; calcium-binding domain occupies D2982–K3022. N3048 and N3089 each carry an N-linked (GlcNAc...) asparagine glycan. LDL-receptor class B repeat units lie at residues Q3069–G3113, G3114–N3156, G3157–T3200, E3201–Y3243, and V3244–L3284. N3264 is a glycosylation site (N-linked (GlcNAc...) asparagine). Residues P3290–V3331 form the EGF-like 13 domain. Cystine bridges form between C3294–C3305, C3301–C3315, and C3317–C3330. 11 consecutive LDL-receptor class A domains span residues S3332–E3371, F3372–I3410, H3411–E3450, V3451–Q3491, M3492–E3533, R3534–P3572, R3573–P3611, P3611–T3649, R3652–R3692, F3693–P3733, and T3739–I3778. A glycan (N-linked (GlcNAc...) asparagine) is linked at N3333. Disulfide bonds link C3334–C3346, C3341–C3359, C3353–C3369, C3374–C3386, C3381–C3399, C3393–C3408, C3413–C3426, C3420–C3439, C3433–C3448, C3453–C3466, C3460–C3479, C3473–C3489, C3494–C3507, C3501–C3520, C3514–C3531, C3536–C3548, C3543–C3561, C3555–C3570, C3575–C3587, C3582–C3600, C3594–C3609, C3613–C3625, C3620–C3638, C3632–C3647, C3654–C3666, C3661–C3679, C3673–C3690, C3695–C3709, C3703–C3722, C3716–C3731, C3741–C3754, C3749–C3767, C3761–C3776, C3785–C3798, C3792–C3807, C3809–C3822, C3828–C3838, C3834–C3847, and C3849–C3860. N-linked (GlcNAc...) asparagine glycosylation is present at N3488. A glycan (N-linked (GlcNAc...) asparagine) is linked at N3662. 2 EGF-like domains span residues K3781 to Q3823 and D3824 to K3861. N-linked (GlcNAc...) asparagine glycosylation occurs at N3788. N3839 is a glycosylation site (N-linked (GlcNAc...) asparagine). LDL-receptor class B repeat units lie at residues G3912–I3954, G3970–R4012, G4013–N4056, and E4057–Y4101. The short motif at R3940 to R3943 is the Recognition site for proteolytical processing element. Residue N3953 is glycosylated (N-linked (GlcNAc...) asparagine). N-linked (GlcNAc...) asparagine glycosylation is found at N4075 and N4125. EGF-like domains lie at V4147–V4183, R4196–E4232, E4232–T4268, T4268–Q4304, Q4304–E4340, E4340–L4375, and S4373–E4409. 17 cysteine pairs are disulfide-bonded: C4151/C4160, C4156/C4169, C4171/C4182, C4200/C4210, C4204/C4220, C4222/C4231, C4236/C4246, C4240/C4256, C4258/C4267, C4272/C4282, C4276/C4292, C4294/C4303, C4308/C4318, C4312/C4328, C4330/C4339, C4344/C4352, and C4347/C4363. The N-linked (GlcNAc...) asparagine glycan is linked to N4179. N4278 and N4279 each carry an N-linked (GlcNAc...) asparagine glycan. Residue N4364 is glycosylated (N-linked (GlcNAc...) asparagine). Intrachain disulfides connect C4365–C4374, C4377–C4387, C4381–C4397, and C4399–C4408. Residues H4420–Y4444 traverse the membrane as a helical segment. Over K4445–A4544 the chain is Cytoplasmic. The interaction with MAFB stretch occupies residues K4445–A4544. Residue T4460 is modified to Phosphothreonine. An NPXY motif motif is present at residues F4502–Y4507. Y4507 is modified (phosphotyrosine). Phosphoserine occurs at positions 4517, 4520, and 4523.

Belongs to the LDLR family. Heterodimer of an 85-kDa membrane-bound carboxyl subunit and a non-covalently attached 515-kDa N-terminal subunit. Intracellular domain interacts with MAFB. Found in a complex with PID1/PCLI1, LRP1 and CUBNI. Interacts with SNX17, PID1/PCLI1, PDGF and CUBN. The intracellular domain interacts with SHC1, GULP1 and DAB1. Can weakly interact (via NPXY motif) with DAB2 (via PID domain); the interaction is enhanced by tyrosine phosphorylation of the NPXY motif. Interacts with MDK; promotes neuronal survival. Interacts with LRPAP1; this interaction is followed by rapid internalization. Interacts with uPA/PLAU and PAI1/SERPINE1, either individually or in complex with each other, leading to rapid endocytosis; this interaction is abolished in the presence of LRPAP1/RAP. Also interacts with tPA/PLAT alone or in complex with SERPINE1. Interacts with the urokinase receptor PLAUR; this interaction leads to PLAUR internalization and is impaired in the presence of SORL1. Interacts with PDGFB. Interacts with TAU/MAPT, leading to endocytosis; this interaction is reduced in the presence of LRPAP1/RAP. Interacts with IGFBP3; this interaction mediates cell growth inhibition independently of IGF1. Interacts with ADGRG6. In terms of assembly, (Microbial infection) Interacts with bacterial exotoxins. As to quaternary structure, (Microbial infection) Interacts with Rift valley fever virus (RVFV) glycoprotein N; this interaction facilitates virus entry. Cleaved into a 85 kDa membrane-spanning subunit (LRP-85) and a 515 kDa large extracellular domain (LRP-515) that remains non-covalently associated. Gamma-secretase-dependent cleavage of LRP-85 releases the intracellular domain from the membrane. Post-translationally, the N-terminus is blocked. In terms of processing, phosphorylated on serine and threonine residues. Phosphorylated on tyrosine residues upon stimulation with PDGF. Tyrosine phosphorylation promotes interaction with SHC1. In terms of tissue distribution, most abundant in liver, brain and lung.

Its subcellular location is the cell membrane. The protein resides in the membrane. It is found in the coated pit. It localises to the cytoplasm. The protein localises to the nucleus. Its subcellular location is the golgi outpost. The protein resides in the cytoskeleton. It is found in the microtubule organizing center. Its function is as follows. Endocytic receptor involved in endocytosis and in phagocytosis of apoptotic cells. Required for early embryonic development. Involved in cellular lipid homeostasis. Involved in the plasma clearance of chylomicron remnants and activated LRPAP1 (alpha 2-macroglobulin), as well as the local metabolism of complexes between plasminogen activators and their endogenous inhibitors. Acts as an LRPAP1 alpha-2-macroglobulin receptor. Acts as TAU/MAPT receptor and controls the endocytosis of TAU/MAPT as well as its subsequent spread. May modulate cellular events, such as APP metabolism, kinase-dependent intracellular signaling, neuronal calcium signaling as well as neurotransmission. Also acts as a receptor for IGFBP3 to mediate cell growth inhibition. Functionally, (Microbial infection) Functions as a receptor for Pseudomonas aeruginosa exotoxin A. This chain is Prolow-density lipoprotein receptor-related protein 1, found in Homo sapiens (Human).